Consider the following 197-residue polypeptide: Class A basic helix-loop-helix protein 15 (197 aa).

Residues 1-12 (MKTKNRPPRRRT) show a composition bias toward basic residues. Disordered stretches follow at residues 1–82 (MKTK…ERER) and 175–197 (TEDQ…REGS). Thr12 and Thr25 each carry phosphothreonine. Polar residues predominate over residues 27–36 (DRSQSGSGAS). Over residues 65 to 82 (SRRENSVQRRLESNERER) the composition is skewed to basic and acidic residues. In terms of domain architecture, bHLH spans 72 to 124 (QRRLESNERERQRMHKLNNAFQALREVIPHVRADKKLSKIETLTLAKNYIKSL).

As to quaternary structure, forms homodimers or heterodimers with TCF3 gene products E12 and E47. These dimers bind to the E-box site, however, heterodimer with MYOD1 does not bind target DNA. In terms of tissue distribution, expressed in liver, spleen and olfactory epithelium. Weaker expression is seen in skeletal muscle, cardiac muscle, eye and brain tissue.

The protein localises to the nucleus. Plays a role in controlling the transcriptional activity of MyoD, ensuring that expanding myoblast populations remain undifferentiated. Repression may occur through muscle-specific E-box occupancy by homodimers. May also negatively regulate bHLH-mediated transcription through an N-terminal repressor domain. Serves as a key regulator of acinar cell function, stability, and identity. Also required for normal organelle localization in exocrine cells and for mitochondrial calcium ion transport. May function as a unique regulator of gene expression in several different embryonic and postnatal cell lineages. Binds to the E-box consensus sequence 5'-CANNTG-3'. The chain is Class A basic helix-loop-helix protein 15 (Bhlha15) from Rattus norvegicus (Rat).